Here is a 283-residue protein sequence, read N- to C-terminus: Undecaprenyl-diphosphatase (283 aa).

7 helical membrane-spanning segments follow: residues 46–66, 95–115, 127–147, 154–174, 200–220, 227–247, and 259–279; these read PGVSVTAAIQLGSVAAVIAYF, VAMVIGTLPILVLGLGIKFFW, VPSIAIVSIVMALFLAMAECM, LGGVTGRDGFVVGLAQALAVI, FSFLLGIPAISIAGLVELKSA, AGPLPLLVGIFSAAVVSWLAI, and TWIFVGYRLVFGAGLLVWWAF.

It belongs to the UppP family.

The protein localises to the cell inner membrane. It carries out the reaction di-trans,octa-cis-undecaprenyl diphosphate + H2O = di-trans,octa-cis-undecaprenyl phosphate + phosphate + H(+). Its function is as follows. Catalyzes the dephosphorylation of undecaprenyl diphosphate (UPP). Confers resistance to bacitracin. The sequence is that of Undecaprenyl-diphosphatase from Synechococcus sp. (strain CC9902).